Consider the following 1095-residue polypeptide: DNA-directed RNA polymerase subunit beta (1095 aa).

The segment at 1069 to 1095 is disordered; sequence DLMQDVNPRRSTPSRPTYESLGKEYEE.

Belongs to the RNA polymerase beta chain family. As to quaternary structure, in cyanobacteria the RNAP catalytic core is composed of 2 alpha, 1 beta, 1 beta', 1 gamma and 1 omega subunit. When a sigma factor is associated with the core the holoenzyme is formed, which can initiate transcription.

It carries out the reaction RNA(n) + a ribonucleoside 5'-triphosphate = RNA(n+1) + diphosphate. Its function is as follows. DNA-dependent RNA polymerase catalyzes the transcription of DNA into RNA using the four ribonucleoside triphosphates as substrates. The chain is DNA-directed RNA polymerase subunit beta from Prochlorococcus marinus (strain NATL1A).